Here is a 1382-residue protein sequence, read N- to C-terminus: MLNSLKSGNRLRVDFAKNPQKIEIPNLLQLQQTSYDTFLMIGQEDRTTAGIEKVFKSIFPIHDVQNRLTLDYLGSEVGKPKYDVRESMVRGLTYSIPLKINIRLTLWDLDEKTGEKIGVKDMKEQSLFIREIPLMTDRTSFIVNGVERVVVNQLHRSPGVIFKEEESNTADNKLIYTGQIIPDRGSWLYFEYDSKDVLYVRINKRRKVPVTILFRALGYSKEDIIKLFYPIVNIKIKNNKFLTEFNPDDFMGRIEFDVKDDKGNLVIGAGKRLTARKAKALIEGGLKLIEYPLELLMDRSTANTIYDPESGEVLFDALTNLDELKLKKLLDLGFESFDIANDLAVGIDASIINAFKADAESLKLLKQTEQIDDENDLAAIRIYKVMRPGEPVTKEAAKDFVKKLFFDPERYDLTKVGRMKMNHKLGVNVPEYVTTLTYEDVIKTVQYLVKVKSGHGHIDDRDHLGNRRIRAIGELLANELHAGLIKMQKAIRDKMTTLSGTLEDLMPHDLVNSKMITSTITEFFTSGQLSQFMDQTNPLSEVTHKRRLSALGEGGLVKERAGFEVRDVHPTHYGRICPVETPEGQNIGLINTLSTFSKVNDLGFIEAPYKKVVDGVVTNEISYYTATQEEGLVIAPGSTKVDENGKIIEPLIEVRKNGEILLMERNSVDLIDISSQMVMGVAASLIPFLEHDDANRALMGSNMMRQAVPLLRPSAPVVGTGLEKIVARDAWEAIKANRAGLVEKADAKNIYIRGEDENGAFIDHYTVNKNVRTNNNTSFGQRIAVKEGDFVQKGQVIADGPSMDKGELAVGINAMVAFMPWNGYNYEDAIILSERLIEEDAFTSVHIYEKEIECRELKHGNEEITRDLPGVKEESISHLDNSGIVKVGTYVTPGMILVGKVTPKGEIKPTPEERLLRAIFGEKAGHVINKSLVCPTSMEGTVVDVKVFTKKGYEKDDRAVAEIESEKAELDLKHHDKLLMLDREEILKINDLLLKATLTKDVELDDVVYKKGETIPVDVLNNVNRFAMKKVVSSYSKEIEKAYNDIKEYFIKQKAHLREEHEEKLQILEHDDILSSGVIKQVKVYIATKRKIKVGDKMAGRHGNKGIVSNIVPKVDMPYLEDGTTVDVILNPLGVPSRMNIGQILEVHLGLAGKKLGNQIQDIFEAKRADFIAELRAKMTEIASVAKLMNGKAFMDSLNDEELVQYAQDWAKGVRFATQIFDGVKAEEFAKLFELAKIDSDGKCVLFDGKTGEKMKERVNVGYMYMLKLHHLVDEKVHARSTGPYSLVTQQPVGGKALFGGQRFGEMEVWALEAYGATNVLKEMLTTKSDDVEGRTKAYRAIANGENVPNSGVPETFFVLTKELKALALDVEIFGEVENNEQ.

It belongs to the RNA polymerase beta chain family. In terms of assembly, the RNAP catalytic core consists of 2 alpha, 1 beta, 1 beta' and 1 omega subunit. When a sigma factor is associated with the core the holoenzyme is formed, which can initiate transcription.

The catalysed reaction is RNA(n) + a ribonucleoside 5'-triphosphate = RNA(n+1) + diphosphate. Its function is as follows. DNA-dependent RNA polymerase catalyzes the transcription of DNA into RNA using the four ribonucleoside triphosphates as substrates. The sequence is that of DNA-directed RNA polymerase subunit beta from Aliarcobacter butzleri (strain RM4018) (Arcobacter butzleri).